Here is a 96-residue protein sequence, read N- to C-terminus: MNTIVKHTVGFIASIVLTLLAVFVTLYTNMTFHAKTTIIFGFAFIQAAVQLLMFMHLTEGKDGQVQSFKVIFAIIITLVTVIGTYWVMQGGHSHHL.

A run of 3 helical transmembrane segments spans residues 8 to 28 (TVGFIASIVLTLLAVFVTLYT), 37 to 57 (TIIFGFAFIQAAVQLLMFMHL), and 68 to 88 (FKVIFAIIITLVTVIGTYWVM).

It belongs to the cytochrome c oxidase bacterial subunit 4 family.

It localises to the cell membrane. It carries out the reaction 2 a quinol + O2 = 2 a quinone + 2 H2O. Functionally, catalyzes quinol oxidation with the concomitant reduction of oxygen to water. The sequence is that of Probable quinol oxidase subunit 4 (qoxD) from Staphylococcus haemolyticus (strain JCSC1435).